The primary structure comprises 461 residues: SWM histone demethylase complex subunit phf1 (461 aa).

Residues 79-130 (PYGGMTMPASSSSGATSVPPEQDPSLSVSFNRLPKSASTKTKNGRIRSSRRE) are disordered. Polar residues predominate over residues 102–119 (PSLSVSFNRLPKSASTKT). Residues 190-246 (VTLCSVCQRGHSPLSNRIVFCDGCNSPYHQLCHHPPIDDATVQDVDAEWFCMKCQYR) form a PHD-type zinc finger.

In terms of assembly, component of the SWM histone demethylase complex composed of at least lsd1, lsd2, phf1 and phf2.

It is found in the nucleus. Component of the SWM histone demethylase complex that specifically demethylates H3K9me2, a specific tag for epigenetic transcriptional activation, thereby acting as a corepressor. Has a role in regulating heterochromatin propagation and euchromatic transcription. This Schizosaccharomyces pombe (strain 972 / ATCC 24843) (Fission yeast) protein is SWM histone demethylase complex subunit phf1 (phf1).